The sequence spans 90 residues: Acylphosphatase (90 aa).

Residues 3 to 90 (QKLFIVTGHV…EQFEHFEIRR (88 aa)) form the Acylphosphatase-like domain. Active-site residues include arginine 18 and asparagine 36.

This sequence belongs to the acylphosphatase family.

It carries out the reaction an acyl phosphate + H2O = a carboxylate + phosphate + H(+). The polypeptide is Acylphosphatase (acyP) (Actinobacillus pleuropneumoniae serotype 5b (strain L20)).